The chain runs to 143 residues: Transcriptional regulator MraZ (143 aa).

2 SpoVT-AbrB domains span residues 5-47 (EYQH…PQEE) and 76-119 (ASEC…SKSE).

The protein belongs to the MraZ family. In terms of assembly, forms oligomers.

The protein localises to the cytoplasm. The protein resides in the nucleoid. The protein is Transcriptional regulator MraZ of Listeria monocytogenes serotype 4b (strain CLIP80459).